The primary structure comprises 78 residues: Translational regulator CsrA (78 aa).

This sequence belongs to the CsrA/RsmA family. Homodimer; the beta-strands of each monomer intercalate to form a hydrophobic core, while the alpha-helices form wings that extend away from the core.

It is found in the cytoplasm. Its function is as follows. A translational regulator that binds mRNA to regulate translation initiation and/or mRNA stability. Usually binds in the 5'-UTR at or near the Shine-Dalgarno sequence preventing ribosome-binding, thus repressing translation. Its main target seems to be the major flagellin gene, while its function is anatagonized by FliW. This is Translational regulator CsrA from Caldicellulosiruptor bescii (strain ATCC BAA-1888 / DSM 6725 / KCTC 15123 / Z-1320) (Anaerocellum thermophilum).